The following is a 333-amino-acid chain: Protein farnesyltransferase/geranylgeranyltransferase type-1 subunit alpha (333 aa).

5 PFTA repeats span residues Leu61–Val95, Asp96–Pro130, Ala132–Gly166, Trp167–Val200, and Met207–Thr241.

It belongs to the protein prenyltransferase subunit alpha family. As to quaternary structure, heterodimer of FTA and FTB (farnesyltransferase). Heterodimer of an alpha and a beta subunit. Mg(2+) is required as a cofactor.

The enzyme catalyses L-cysteinyl-[protein] + (2E,6E)-farnesyl diphosphate = S-(2E,6E)-farnesyl-L-cysteinyl-[protein] + diphosphate. The catalysed reaction is geranylgeranyl diphosphate + L-cysteinyl-[protein] = S-geranylgeranyl-L-cysteinyl-[protein] + diphosphate. In terms of biological role, essential subunit of both the farnesyltransferase and the geranylgeranyltransferase complex. Contributes to the transfer of a farnesyl or geranylgeranyl moiety from farnesyl or geranylgeranyl diphosphate to a cysteine at the fourth position from the C-terminus of several proteins having the C-terminal sequence Cys-aliphatic-aliphatic-X. This chain is Protein farnesyltransferase/geranylgeranyltransferase type-1 subunit alpha (FTA), found in Pisum sativum (Garden pea).